Reading from the N-terminus, the 295-residue chain is Ethanolamine ammonia-lyase small subunit (295 aa).

3 residues coordinate adenosylcob(III)alamin: V207, E228, and C258.

The protein belongs to the EutC family. In terms of assembly, the basic unit is a heterodimer which dimerizes to form tetramers. The heterotetramers trimerize; 6 large subunits form a core ring with 6 small subunits projecting outwards. The cofactor is adenosylcob(III)alamin.

The protein localises to the bacterial microcompartment. It catalyses the reaction ethanolamine = acetaldehyde + NH4(+). Its pathway is amine and polyamine degradation; ethanolamine degradation. Catalyzes the deamination of various vicinal amino-alcohols to oxo compounds. Allows this organism to utilize ethanolamine as the sole source of nitrogen and carbon in the presence of external vitamin B12. This is Ethanolamine ammonia-lyase small subunit from Escherichia coli O139:H28 (strain E24377A / ETEC).